A 319-amino-acid polypeptide reads, in one-letter code: Phospho-N-acetylmuramoyl-pentapeptide-transferase (319 aa).

10 helical membrane passes run 5–25 (LIPF…FIGF), 51–71 (TMGG…VLIW), 79–99 (TWIL…DDGI), 116–136 (LGQI…HFAF), 149–169 (SFLF…AVNL), 172–192 (GLDG…AWIA), 197–217 (NWVI…FFIF), 224–244 (IFMG…VSIF), 252–272 (LLIG…VISF), and 299–319 (VDIV…IIWG).

The protein belongs to the glycosyltransferase 4 family. MraY subfamily. The cofactor is Mg(2+).

Its subcellular location is the cell membrane. The enzyme catalyses UDP-N-acetyl-alpha-D-muramoyl-L-alanyl-gamma-D-glutamyl-L-lysyl-D-alanyl-D-alanine + di-trans,octa-cis-undecaprenyl phosphate = Mur2Ac(oyl-L-Ala-gamma-D-Glu-L-Lys-D-Ala-D-Ala)-di-trans,octa-cis-undecaprenyl diphosphate + UMP. The protein operates within cell wall biogenesis; peptidoglycan biosynthesis. In terms of biological role, catalyzes the initial step of the lipid cycle reactions in the biosynthesis of the cell wall peptidoglycan: transfers peptidoglycan precursor phospho-MurNAc-pentapeptide from UDP-MurNAc-pentapeptide onto the lipid carrier undecaprenyl phosphate, yielding undecaprenyl-pyrophosphoryl-MurNAc-pentapeptide, known as lipid I. This Lactobacillus gasseri (strain ATCC 33323 / DSM 20243 / BCRC 14619 / CIP 102991 / JCM 1131 / KCTC 3163 / NCIMB 11718 / NCTC 13722 / AM63) protein is Phospho-N-acetylmuramoyl-pentapeptide-transferase.